A 268-amino-acid polypeptide reads, in one-letter code: Cytochrome c oxidase subunit 3 (268 aa).

The next 7 membrane-spanning stretches (helical) occupy residues 23–43 (ILVS…MHGF), 49–69 (WVVF…RDII), 88–108 (IGFI…FWAF), 141–161 (TILL…LLGG), 166–186 (TLLG…CQYM), 203–223 (VFYF…IMLG), and 246–266 (ILYY…FYWW).

It belongs to the cytochrome c oxidase subunit 3 family. As to quaternary structure, component of the cytochrome c oxidase (complex IV, CIV), a multisubunit enzyme composed of a catalytic core of 3 subunits and several supernumerary subunits. The complex exists as a monomer or a dimer and forms supercomplexes (SCs) in the inner mitochondrial membrane with ubiquinol-cytochrome c oxidoreductase (cytochrome b-c1 complex, complex III, CIII).

It is found in the mitochondrion inner membrane. The enzyme catalyses 4 Fe(II)-[cytochrome c] + O2 + 8 H(+)(in) = 4 Fe(III)-[cytochrome c] + 2 H2O + 4 H(+)(out). Component of the cytochrome c oxidase, the last enzyme in the mitochondrial electron transport chain which drives oxidative phosphorylation. The respiratory chain contains 3 multisubunit complexes succinate dehydrogenase (complex II, CII), ubiquinol-cytochrome c oxidoreductase (cytochrome b-c1 complex, complex III, CIII) and cytochrome c oxidase (complex IV, CIV), that cooperate to transfer electrons derived from NADH and succinate to molecular oxygen, creating an electrochemical gradient over the inner membrane that drives transmembrane transport and the ATP synthase. Cytochrome c oxidase is the component of the respiratory chain that catalyzes the reduction of oxygen to water. Electrons originating from reduced cytochrome c in the intermembrane space (IMS) are transferred via the dinuclear copper A center (CU(A)) of subunit 2 and heme A of subunit 1 to the active site in subunit 1, a binuclear center (BNC) formed by heme A3 and copper B (CU(B)). The BNC reduces molecular oxygen to 2 water molecules using 4 electrons from cytochrome c in the IMS and 4 protons from the mitochondrial matrix. This Yarrowia lipolytica (strain CLIB 122 / E 150) (Yeast) protein is Cytochrome c oxidase subunit 3 (COX3).